Consider the following 347-residue polypeptide: Lipoyl synthase (347 aa).

Positions 55, 60, 66, 81, 85, 88, and 292 each coordinate [4Fe-4S] cluster. Residues 67 to 281 (WEDREASFLI…SEAAYDMGFP (215 aa)) enclose the Radical SAM core domain.

This sequence belongs to the radical SAM superfamily. Lipoyl synthase family. Requires [4Fe-4S] cluster as cofactor.

The protein resides in the cytoplasm. It carries out the reaction [[Fe-S] cluster scaffold protein carrying a second [4Fe-4S](2+) cluster] + N(6)-octanoyl-L-lysyl-[protein] + 2 oxidized [2Fe-2S]-[ferredoxin] + 2 S-adenosyl-L-methionine + 4 H(+) = [[Fe-S] cluster scaffold protein] + N(6)-[(R)-dihydrolipoyl]-L-lysyl-[protein] + 4 Fe(3+) + 2 hydrogen sulfide + 2 5'-deoxyadenosine + 2 L-methionine + 2 reduced [2Fe-2S]-[ferredoxin]. It participates in protein modification; protein lipoylation via endogenous pathway; protein N(6)-(lipoyl)lysine from octanoyl-[acyl-carrier-protein]: step 2/2. In terms of biological role, catalyzes the radical-mediated insertion of two sulfur atoms into the C-6 and C-8 positions of the octanoyl moiety bound to the lipoyl domains of lipoate-dependent enzymes, thereby converting the octanoylated domains into lipoylated derivatives. The polypeptide is Lipoyl synthase (Corynebacterium urealyticum (strain ATCC 43042 / DSM 7109)).